Consider the following 498-residue polypeptide: Glycerol kinase (498 aa).

Thr-12 contacts ADP. ATP contacts are provided by Thr-12, Thr-13, and Ser-14. Thr-12 contributes to the sn-glycerol 3-phosphate binding site. Position 16 (Arg-16) interacts with ADP. Arg-82, Glu-83, Tyr-134, and Asp-244 together coordinate sn-glycerol 3-phosphate. Glycerol contacts are provided by Arg-82, Glu-83, Tyr-134, Asp-244, and Gln-245. ADP-binding residues include Thr-266 and Gly-310. Thr-266, Gly-310, Gln-314, and Gly-411 together coordinate ATP. Gly-411 and Asn-415 together coordinate ADP.

The protein belongs to the FGGY kinase family.

It catalyses the reaction glycerol + ATP = sn-glycerol 3-phosphate + ADP + H(+). The protein operates within polyol metabolism; glycerol degradation via glycerol kinase pathway; sn-glycerol 3-phosphate from glycerol: step 1/1. Its activity is regulated as follows. Inhibited by fructose 1,6-bisphosphate (FBP). In terms of biological role, key enzyme in the regulation of glycerol uptake and metabolism. Catalyzes the phosphorylation of glycerol to yield sn-glycerol 3-phosphate. This Chloroflexus aurantiacus (strain ATCC 29366 / DSM 635 / J-10-fl) protein is Glycerol kinase.